Reading from the N-terminus, the 275-residue chain is L-aspartate dehydrogenase (275 aa).

2 residues coordinate NAD(+): Ala130 and Asn196. The active site involves His226.

Belongs to the L-aspartate dehydrogenase family.

The catalysed reaction is L-aspartate + NADP(+) + H2O = oxaloacetate + NH4(+) + NADPH + H(+). It catalyses the reaction L-aspartate + NAD(+) + H2O = oxaloacetate + NH4(+) + NADH + H(+). The protein operates within cofactor biosynthesis; NAD(+) biosynthesis; iminoaspartate from L-aspartate (dehydrogenase route): step 1/1. Functionally, specifically catalyzes the NAD or NADP-dependent dehydrogenation of L-aspartate to iminoaspartate. This Ruegeria pomeroyi (strain ATCC 700808 / DSM 15171 / DSS-3) (Silicibacter pomeroyi) protein is L-aspartate dehydrogenase.